A 210-amino-acid polypeptide reads, in one-letter code: MDKNKNISMAVIKRLPKYHRYLNELMKNDVDRISSKELGEKIGFTASQIRQDLNCFGDFGQQGYGYNVKELYTQINSILGLDKEYNAVLIGAGNIGQAIANYTRFDKLGIMITAIFDANPKLIGIKIRDIEIRDIDELGSFLKSDSVDIGVICVPKKSAQRVSDELINGGIRGIWNFAPIDLAVPKDVKVENVHLSESVSTLIYQLHQQR.

The H-T-H motif DNA-binding region spans 17-56 (KYHRYLNELMKNDVDRISSKELGEKIGFTASQIRQDLNCF). An NAD(+)-binding site is contributed by 91-96 (GAGNIG).

Belongs to the transcriptional regulatory Rex family. As to quaternary structure, homodimer.

The protein localises to the cytoplasm. In terms of biological role, modulates transcription in response to changes in cellular NADH/NAD(+) redox state. In Clostridium botulinum (strain Eklund 17B / Type B), this protein is Redox-sensing transcriptional repressor Rex.